A 253-amino-acid chain; its full sequence is 5'-nucleotidase SurE (253 aa).

4 residues coordinate a divalent metal cation: D8, D9, S39, and N95.

This sequence belongs to the SurE nucleotidase family. A divalent metal cation serves as cofactor.

It localises to the cytoplasm. It catalyses the reaction a ribonucleoside 5'-phosphate + H2O = a ribonucleoside + phosphate. Functionally, nucleotidase that shows phosphatase activity on nucleoside 5'-monophosphates. This is 5'-nucleotidase SurE from Kosmotoga olearia (strain ATCC BAA-1733 / DSM 21960 / TBF 19.5.1).